Consider the following 74-residue polypeptide: Translation initiation factor IF-1 (74 aa).

Residues 1–73 (MSNKEDIIKM…TKGRIVYRKK (73 aa)) form the S1-like domain.

The protein belongs to the IF-1 family. In terms of assembly, component of the 30S ribosomal translation pre-initiation complex which assembles on the 30S ribosome in the order IF-2 and IF-3, IF-1 and N-formylmethionyl-tRNA(fMet); mRNA recruitment can occur at any time during PIC assembly.

It localises to the cytoplasm. Its function is as follows. One of the essential components for the initiation of protein synthesis. Stabilizes the binding of IF-2 and IF-3 on the 30S subunit to which N-formylmethionyl-tRNA(fMet) subsequently binds. Helps modulate mRNA selection, yielding the 30S pre-initiation complex (PIC). Upon addition of the 50S ribosomal subunit IF-1, IF-2 and IF-3 are released leaving the mature 70S translation initiation complex. This chain is Translation initiation factor IF-1, found in Thermosipho melanesiensis (strain DSM 12029 / CIP 104789 / BI429).